Consider the following 427-residue polypeptide: Trigger factor (427 aa).

The PPIase FKBP-type domain occupies 160–240 (TDTVIGDVEK…VKEVKRLELP (81 aa)).

Belongs to the FKBP-type PPIase family. Tig subfamily.

The protein localises to the cytoplasm. The enzyme catalyses [protein]-peptidylproline (omega=180) = [protein]-peptidylproline (omega=0). In terms of biological role, involved in protein export. Acts as a chaperone by maintaining the newly synthesized protein in an open conformation. Functions as a peptidyl-prolyl cis-trans isomerase. This is Trigger factor from Chlorobium phaeobacteroides (strain DSM 266 / SMG 266 / 2430).